A 188-amino-acid polypeptide reads, in one-letter code: MGGQTLAESSQVLRQEVLGARRFSNFFWAGISTIGGVGFLLAGLSSYFGKNLLIVSDTTGLQFIPQGVALLFYGVAGSTVAGYLWLTMALNVGSGYNEFNKKSGQVTIFRWGFPGKNRRIELINKIADVQAVKAEIKEGVNPKRSLYLKVKQRRDIPLTRAGQPISLSQLENQGAELARFLGVPLEGL.

Helical transmembrane passes span 26-48 (FFWAGISTIGGVGFLLAGLSSYF) and 63-85 (FIPQGVALLFYGVAGSTVAGYLW).

It belongs to the Ycf4 family.

The protein localises to the cellular thylakoid membrane. In terms of biological role, seems to be required for the assembly of the photosystem I complex. This is Photosystem I assembly protein Ycf4 from Synechocystis sp. (strain ATCC 27184 / PCC 6803 / Kazusa).